A 179-amino-acid chain; its full sequence is Segregation and condensation protein B (179 aa).

Belongs to the ScpB family. Homodimer. Homodimerization may be required to stabilize the binding of ScpA to the Smc head domains. Component of a cohesin-like complex composed of ScpA, ScpB and the Smc homodimer, in which ScpA and ScpB bind to the head domain of Smc. The presence of the three proteins is required for the association of the complex with DNA.

It is found in the cytoplasm. Its function is as follows. Participates in chromosomal partition during cell division. May act via the formation of a condensin-like complex containing Smc and ScpA that pull DNA away from mid-cell into both cell halves. This is Segregation and condensation protein B from Clostridioides difficile (strain 630) (Peptoclostridium difficile).